The sequence spans 414 residues: Lactosylceramide alpha-2,3-sialyltransferase (414 aa).

Topologically, residues 1 to 65 are cytoplasmic; that stretch reads MHTEAVGGAA…MRRPSLLIKD (65 aa). The chain crosses the membrane as a helical; Signal-anchor for type II membrane protein span at residues 66 to 86; the sequence is ICKCTLVAFGVWLLYILILNY. Topologically, residues 87–414 are lumenal; the sequence is TAEECDMKRM…VVEDLSGGIH (328 aa). A disulfide bond links Cys194 and Cys352. N-linked (GlcNAc...) asparagine glycosylation is found at Asn235, Asn279, and Asn389.

Belongs to the glycosyltransferase 29 family. Mainly expressed in brain, and then testis, heart and liver, almost all tissues showed some levels of the gene expression.

It is found in the golgi apparatus membrane. It carries out the reaction a beta-D-Gal-(1-&gt;4)-beta-D-Glc-(1&lt;-&gt;1)-Cer(d18:1(4E)) + CMP-N-acetyl-beta-neuraminate = a ganglioside GM3 (d18:1(4E)) + CMP + H(+). The catalysed reaction is ganglioside GA2 (d18:1(4E)/18:0) + CMP-N-acetyl-beta-neuraminate = ganglioside GM2 (d18:1(4E)/18:0) + CMP + H(+). The enzyme catalyses a beta-D-Gal-(1&lt;-&gt;1')-ceramide + CMP-N-acetyl-beta-neuraminate = N-acetyl-alpha-neuraminosyl-(2-&gt;3)-beta-D-galactosyl-(1&lt;-&gt;1')-ceramide + CMP + H(+). It catalyses the reaction ganglioside GA1 (d18:1(4E)/18:0) + CMP-N-acetyl-beta-neuraminate = ganglioside GM1 (d18:1(4E)/18:0) + CMP + H(+). Functionally, (Microbial infection) Gangliosides GD1b and GT1b (derived from GM3) may serve as receptors for some C.botulinum neurotoxins (minimally types BoNT/A, B, C). Transfers the sialyl group (N-acetyl-alpha-neuraminyl or NeuAc) from CMP-NeuAc to the non-reducing terminal galactose (Gal) of glycosphingolipids forming gangliosides (important molecules involved in the regulation of multiple cellular processes, including cell proliferation and differentiation, apoptosis, embryogenesis, development, and oncogenesis). Mainly involved in the biosynthesis of ganglioside GM3 but can also use different glycolipids as substrate acceptors such as D-galactosylceramide (GalCer), asialo-GM2 (GA2) and asialo-GM1 (GA1), although less preferentially than beta-D-Gal-(1-&gt;4)-beta-D-Glc-(1&lt;-&gt;1)-Cer (LacCer). The sequence is that of Lactosylceramide alpha-2,3-sialyltransferase (St3gal5) from Mus musculus (Mouse).